A 277-amino-acid polypeptide reads, in one-letter code: 3-methyl-2-oxobutanoate hydroxymethyltransferase (277 aa).

Residues Asp53 and Asp96 each coordinate Mg(2+). Residues 53–54 (DS), Asp96, and Lys126 contribute to the 3-methyl-2-oxobutanoate site. Glu128 serves as a coordination point for Mg(2+). The active-site Proton acceptor is the Glu195.

It belongs to the PanB family. As to quaternary structure, homodecamer; pentamer of dimers. It depends on Mg(2+) as a cofactor.

Its subcellular location is the cytoplasm. It catalyses the reaction 3-methyl-2-oxobutanoate + (6R)-5,10-methylene-5,6,7,8-tetrahydrofolate + H2O = 2-dehydropantoate + (6S)-5,6,7,8-tetrahydrofolate. It participates in cofactor biosynthesis; (R)-pantothenate biosynthesis; (R)-pantoate from 3-methyl-2-oxobutanoate: step 1/2. Its function is as follows. Catalyzes the reversible reaction in which hydroxymethyl group from 5,10-methylenetetrahydrofolate is transferred onto alpha-ketoisovalerate to form ketopantoate. This chain is 3-methyl-2-oxobutanoate hydroxymethyltransferase, found in Chlorobium phaeobacteroides (strain BS1).